Reading from the N-terminus, the 66-residue chain is Cell division protein FtsB (66 aa).

Residues 1–3 (MKM) lie on the Cytoplasmic side of the membrane. Residues 4–21 (LKIFLLFLLFWLQCSLWI) traverse the membrane as a helical segment. At 22-66 (GKNGILDYIKIYKKIIVQKKKNEDFQIRNNQLILEIERLNNAIKN) the chain is on the extracellular side. Positions 38 to 66 (VQKKKNEDFQIRNNQLILEIERLNNAIKN) form a coiled coil.

The protein belongs to the FtsB family.

The protein localises to the cell membrane. Its function is as follows. Essential cell division protein. May link together the upstream cell division proteins, which are predominantly cytoplasmic, with the downstream cell division proteins, which are predominantly extracellular. The protein is Cell division protein FtsB of Buchnera aphidicola subsp. Schizaphis graminum (strain Sg).